The chain runs to 138 residues: Putative pre-16S rRNA nuclease (138 aa).

This sequence belongs to the YqgF nuclease family.

Its subcellular location is the cytoplasm. Functionally, could be a nuclease involved in processing of the 5'-end of pre-16S rRNA. This Listeria monocytogenes serotype 4b (strain CLIP80459) protein is Putative pre-16S rRNA nuclease.